Reading from the N-terminus, the 467-residue chain is Light-independent protochlorophyllide reductase subunit N (467 aa).

Residues Cys-23, Cys-48, and Cys-108 each coordinate [4Fe-4S] cluster.

Belongs to the BchN/ChlN family. In terms of assembly, protochlorophyllide reductase is composed of three subunits; ChlL, ChlN and ChlB. Forms a heterotetramer of two ChlB and two ChlN subunits. [4Fe-4S] cluster is required as a cofactor.

The enzyme catalyses chlorophyllide a + oxidized 2[4Fe-4S]-[ferredoxin] + 2 ADP + 2 phosphate = protochlorophyllide a + reduced 2[4Fe-4S]-[ferredoxin] + 2 ATP + 2 H2O. Its pathway is porphyrin-containing compound metabolism; chlorophyll biosynthesis (light-independent). In terms of biological role, component of the dark-operative protochlorophyllide reductase (DPOR) that uses Mg-ATP and reduced ferredoxin to reduce ring D of protochlorophyllide (Pchlide) to form chlorophyllide a (Chlide). This reaction is light-independent. The NB-protein (ChlN-ChlB) is the catalytic component of the complex. This is Light-independent protochlorophyllide reductase subunit N from Trichormus variabilis (strain ATCC 29413 / PCC 7937) (Anabaena variabilis).